A 146-amino-acid polypeptide reads, in one-letter code: Hemoglobin subunit beta (146 aa).

In terms of domain architecture, Globin spans 2-146 (HWSAEEKQLI…VAHALARKYH (145 aa)). 2 residues coordinate heme b: His63 and His92.

It belongs to the globin family. As to quaternary structure, heterotetramer of two alpha chains and two beta chains. As to expression, red blood cells.

Functionally, involved in oxygen transport from the lung to the various peripheral tissues. The protein is Hemoglobin subunit beta (HBB) of Columba livia (Rock dove).